The primary structure comprises 612 residues: DNA mismatch repair protein MutL (612 aa).

Belongs to the DNA mismatch repair MutL/HexB family.

Its function is as follows. This protein is involved in the repair of mismatches in DNA. It is required for dam-dependent methyl-directed DNA mismatch repair. May act as a 'molecular matchmaker', a protein that promotes the formation of a stable complex between two or more DNA-binding proteins in an ATP-dependent manner without itself being part of a final effector complex. The sequence is that of DNA mismatch repair protein MutL from Bartonella quintana (strain Toulouse) (Rochalimaea quintana).